The chain runs to 370 residues: Coproporphyrin III ferrochelatase (370 aa).

Fe-coproporphyrin III-binding residues include serine 58 and tyrosine 127. Residues histidine 189 and glutamate 276 each contribute to the Fe(2+) site.

Belongs to the ferrochelatase family.

It localises to the cytoplasm. It carries out the reaction Fe-coproporphyrin III + 2 H(+) = coproporphyrin III + Fe(2+). The protein operates within porphyrin-containing compound metabolism; protoheme biosynthesis. In terms of biological role, involved in coproporphyrin-dependent heme b biosynthesis. Catalyzes the insertion of ferrous iron into coproporphyrin III to form Fe-coproporphyrin III. This Corynebacterium glutamicum (strain ATCC 13032 / DSM 20300 / JCM 1318 / BCRC 11384 / CCUG 27702 / LMG 3730 / NBRC 12168 / NCIMB 10025 / NRRL B-2784 / 534) protein is Coproporphyrin III ferrochelatase.